We begin with the raw amino-acid sequence, 859 residues long: MSNSQWVPVSLNEYLAHLPMSDEQRAELASCTTFAELHERLSAQPVTDPAEAAQASVGRRLTLSADDLEDAEMLGVDASGRLCLKATPPIRRTKVVPEPWRTNILVRGWRRLTGKSNPPKPDHSDLPRDLPKSRWRTVGSIRRYILLILMLGQTIVAGSYMKGILPYQGWSLVSLDEITRQTFVQTALQVLPYALQTSILLLFGILFCWVSAGFWTALMGFLELLTGRDKYRISGASAGNEPIEAGARTALVMPICNEDVPRVFAGLRATFESVAATGNLDRFDFFVLSDTNETDIAVAEQQAWLDVCRETKGFGSIFYRRRRRRVKRKSGNLDDFCRRWGGEYRYMVVLDADSVMSGECLTSLVRLMEATPDAGIIQTAPRASGMDTLYARMQQFATRVYGPLFTAGLHFWQLGESHYWGHNAIIRMKPFIEHCALAPLPGKGAFAGAILSHDFVEAALMRRAGWGVWIAYDLPGSYEELPPNLLDELKRDRRWCHGNLMNFRLFLVKGMHPVHRAVFLTGVMSYLSAPLWFFFLVLSTALLAVNTLMEPTYFLEPRQLYPLWPQWHPERAVALFSTTIVLLFLPKLLSVILIWAKGAKGFGGKFKVTVSMLLEMLFSVLLAPVRMLFHTRFVLAAFLGWAATWNSPQRDDDSTPWLEAVKRHGPQTLLGACWALLVFWLNPSFLWWLAPIVVSLMLSIPVSVISSRTNLGLKARDEKFFLIPEEFEPPQELVSTDQYTHENRWHALKQGFIRAVVDPRQNALACALATSRHRQAQPIEVVRMERVDHALKVGPAKLDNQHRLMLLSDPVALGRLHERVWSEGHEEWLAAWRASIEADPHAPLLPLQPVVKAPEPVLV.

6 helical membrane passes run 144–166 (YILLILMLGQTIVAGSYMKGILP), 200–222 (LLLFGILFCWVSAGFWTALMGFL), 523–545 (VMSYLSAPLWFFFLVLSTALLAV), 573–595 (VALFSTTIVLLFLPKLLSVILIW), 608–630 (VTVSMLLEMLFSVLLAPVRMLFH), and 684–706 (SFLWWLAPIVVSLMLSIPVSVIS).

It belongs to the glycosyltransferase 2 family. OpgH subfamily.

It localises to the cell inner membrane. The protein operates within glycan metabolism; osmoregulated periplasmic glucan (OPG) biosynthesis. In terms of biological role, involved in the biosynthesis of osmoregulated periplasmic glucans (OPGs). The chain is Glucans biosynthesis glucosyltransferase H from Pseudomonas syringae pv. tomato (strain ATCC BAA-871 / DC3000).